Reading from the N-terminus, the 336-residue chain is IgLON family member 5 (336 aa).

An N-terminal signal peptide occupies residues 1–30 (MPPPAPGARLRLLAAAALAGLAVISRGLLS). Ig-like C2-type domains follow at residues 33-122 (LEFS…QPYT), 132-213 (PARI…VLVT), and 218-307 (PTIT…MRLL). Residues Asn-41, Asn-49, Asn-67, and Asn-137 are each glycosylated (N-linked (GlcNAc...) asparagine). Cys-54 and Cys-112 are disulfide-bonded. 2 disulfide bridges follow: Cys-154-Cys-195 and Cys-238-Cys-291. The N-linked (GlcNAc...) asparagine glycan is linked to Asn-288.

The protein belongs to the immunoglobulin superfamily. IgLON family.

It is found in the secreted. The polypeptide is IgLON family member 5 (Iglon5) (Mus musculus (Mouse)).